A 487-amino-acid chain; its full sequence is Putative sugar kinase YoaC (487 aa).

The protein belongs to the FGGY kinase family.

In Bacillus subtilis (strain 168), this protein is Putative sugar kinase YoaC (yoaC).